The following is a 634-amino-acid chain: Nicotinic receptor-associated protein 1 (634 aa).

C2 domains follow at residues 1 to 141 and 159 to 295; these read MNQP…KAHL and KTGS…EILL. The Ca(2+) site is built by Leu29, Asp30, Asp36, Asp105, Asp107, Asp119, Asp189, Asp195, Asp251, Asp253, and Asp271. Positions 338–557 constitute a VWFA domain; sequence DFAVAVDFTA…LDPDVIQENL (220 aa). The disordered stretch occupies residues 576-603; the sequence is RGFQPRPVDDPWRRDSPPPEFDPILDGT. Positions 582-592 are enriched in basic and acidic residues; it reads PVDDPWRRDSP.

Belongs to the copine family. In terms of assembly, interacts with nicotinic acetylcholine receptor. Requires Ca(2+) as cofactor. As to expression, expressed in head and tail neurons, ventral cord moto-neurons, body wall muscles and hypodermal cells of the vulva.

Its subcellular location is the cell membrane. Its function is as follows. Exhibits calcium-dependent phospholipid binding properties. May function in membrane trafficking. Regulates synaptic levels of nicotinic acetylcholine receptor subunit lev-1 and unc-38 in the nerve cord. Involved in nicotinic acetylcholine receptor (nAChR)-mediated sensitivity to nicotine and levamisole. Affects directional sperm motility. This Caenorhabditis elegans protein is Nicotinic receptor-associated protein 1 (nra-1).